The following is a 711-amino-acid chain: Dixin (711 aa).

Leu2 carries the N-myristoyl glycine lipid modification. The residue at position 13 (Val13) is a Phosphoserine. The 134-residue stretch at 20–153 (EQQLQAYVAW…LVLALAAHFK (134 aa)) folds into the Calponin-homology (CH) domain. The tract at residues 153 to 326 (KPGSSRTVSQ…LEKEMEEAKK (174 aa)) is actin-binding. Phosphoserine is present on Ser212. 3 disordered regions span residues 233–258 (GQQKSPSESSCSSLTSPSPIHSAKSE), 271–298 (VIIPSEGIENRTDEPDSPSSRDWRPGSR), and 584–623 (TQKKQERKVGGRSPRNQASSEYRASWPPNSTLPHSQSSPA). Low complexity predominate over residues 237–254 (SPSESSCSSLTSPSPIHS). The residue at position 257 (Ser257) is a Phosphoserine. Residues 278–295 (IENRTDEPDSPSSRDWRP) show a composition bias toward basic and acidic residues. Positions 279-452 (ENRTDEPDSP…NRLLGEYKKE (174 aa)) form a coiled coil. Residues 597–623 (PRNQASSEYRASWPPNSTLPHSQSSPA) show a composition bias toward polar residues. In terms of domain architecture, DIX spans 600–680 (QASSEYRASW…HFKALDPEFG (81 aa)). Ser618 carries the phosphoserine modification.

Belongs to the DIXDC1 family. In terms of assembly, may bind filamentous actin. Directly interacts (via DIX domain) with DVL2 (via DIX domain). Interacts with gamma-tubulin. Interacts with the complex composed of DVL2 and Rac. Interacts with AXIN1; competes with MAP3K1. Interacts with MAP3K4 preventing MAP3K4 interaction with AXIN1. Phosphorylated on tyrosine and serine residues. Post-translationally, polyubiquitinated, leading to its proteasomal degradation. WNT3A signaling increases DIXDC1 protein levels by inhibiting its ubiquitination and subsequent degradation. As to expression, abundantly expressed in brain and testis and to a lower extent in lung, kidney, colon, ovary and urinary bladder. Expressed in brain, liver, testis and spleen (at protein level). Expressed throughout the brain with strong expression in main and accessory olfactory bulbs, cerebral cortex, piriform cortex, hippocampus, habenular nucleus, dorsal thalamus, superior and inferior colliculi and cerebellum.

The protein resides in the cell junction. The protein localises to the focal adhesion. It localises to the cytoplasm. It is found in the cytoskeleton. Its subcellular location is the stress fiber. In terms of biological role, positive effector of the Wnt signaling pathway; activates WNT3A signaling via DVL2. Regulates JNK activation by AXIN1 and DVL2. The sequence is that of Dixin (Dixdc1) from Mus musculus (Mouse).